A 68-amino-acid chain; its full sequence is DNA-directed RNA polymerase subunit omega (68 aa).

The protein belongs to the RNA polymerase subunit omega family. The RNAP catalytic core consists of 2 alpha, 1 beta, 1 beta' and 1 omega subunit. When a sigma factor is associated with the core the holoenzyme is formed, which can initiate transcription.

It catalyses the reaction RNA(n) + a ribonucleoside 5'-triphosphate = RNA(n+1) + diphosphate. Functionally, promotes RNA polymerase assembly. Latches the N- and C-terminal regions of the beta' subunit thereby facilitating its interaction with the beta and alpha subunits. The chain is DNA-directed RNA polymerase subunit omega from Persephonella marina (strain DSM 14350 / EX-H1).